Reading from the N-terminus, the 99-residue chain is Integration host factor subunit alpha (99 aa).

It belongs to the bacterial histone-like protein family. In terms of assembly, heterodimer of an alpha and a beta chain.

In terms of biological role, this protein is one of the two subunits of integration host factor, a specific DNA-binding protein that functions in genetic recombination as well as in transcriptional and translational control. The polypeptide is Integration host factor subunit alpha (Xylella fastidiosa (strain M12)).